The following is an 80-amino-acid chain: Centromere protein X (80 aa).

This sequence belongs to the CENP-X/MHF2 family. As to quaternary structure, heterodimer with CENPX, sometimes called MHF; this interaction stabilizes both partners. MHF heterodimers can assemble to form tetrameric structures. MHF also coassemble with CENPT-CENPW heterodimers at centromeres to form the tetrameric CENP-T-W-S-X complex. Forms a discrete complex with FANCM and CENPX, called FANCM-MHF; this interaction, probably mediated by direct binding between CENPS and FANCM, leads to synergistic activation of double-stranded DNA binding and strongly stimulates FANCM-mediated DNA remodeling. Recruited by FANCM to the Fanconi anemia (FA) core complex, which consists of CENPS, CENPX, FANCA, FANCB, FANCC, FANCE, FANCF, FANCG, FANCL, FANCM, FAAP24 and FAAP100. The FA core complex associates with Bloom syndrome (BLM) complex, which consists of at least BLM, DNA topoisomerase 3-alpha (TOP3A), RMI1/BLAP75, RPA1/RPA70 and RPA2/RPA32. The super complex between FA and BLM is called BRAFT.

Its subcellular location is the nucleus. The protein resides in the chromosome. It is found in the centromere. It localises to the kinetochore. Functionally, DNA-binding component of the Fanconi anemia (FA) core complex. Required for the normal activation of the FA pathway, leading to monoubiquitination of the FANCI-FANCD2 complex in response to DNA damage, cellular resistance to DNA cross-linking drugs, and prevention of chromosomal breakage. In complex with CENPS (MHF heterodimer), crucial cofactor for FANCM in both binding and ATP-dependent remodeling of DNA. Stabilizes FANCM. In complex with CENPS and FANCM (but not other FANC proteins), rapidly recruited to blocked forks and promotes gene conversion at blocked replication forks. In complex with CENPS, CENPT and CENPW (CENP-T-W-S-X heterotetramer), involved in the formation of a functional kinetochore outer plate, which is essential for kinetochore-microtubule attachment and faithful mitotic progression. As a component of MHF and CENP-T-W-S-X complexes, binds DNA and bends it to form a nucleosome-like structure. DNA-binding function is fulfilled in the presence of CENPS, with the following preference for DNA substates: Holliday junction &gt; double-stranded &gt; splay arm &gt; single-stranded. Does not bind DNA on its own. The protein is Centromere protein X (CENPX) of Gallus gallus (Chicken).